The primary structure comprises 462 residues: Phosphoglycerate kinase, chloroplastic (462 aa).

Residues 1 to 61 (MALSMKMRAN…AGRSRIVVEA (61 aa)) constitute a chloroplast transit peptide. Residues Ala83, Asp84, Asn86, Arg101, Ser123, His124, Gly126, Arg127, Arg183, His215, and Arg216 each contribute to the (2R)-3-phosphoglycerate site. Gly261 contributes to the ADP binding site. A CDP-binding site is contributed by Gly261. AMP-binding residues include Lys263 and Lys267. Residue Lys267 participates in ATP binding. Gly285 lines the ADP pocket. Residue Gly285 coordinates CDP. AMP contacts are provided by Gly286 and Gly358. ATP is bound by residues Gly286 and Gly358. Gly383 and Phe388 together coordinate CDP. Phe388 is a binding site for ADP. Glu389 provides a ligand contact to AMP. Glu389, Asp420, and Ser421 together coordinate ATP. Position 420 (Asp420) interacts with Mg(2+).

Belongs to the phosphoglycerate kinase family. As to quaternary structure, monomer. It depends on Mg(2+) as a cofactor.

The protein resides in the plastid. The protein localises to the chloroplast. The catalysed reaction is (2R)-3-phosphoglycerate + ATP = (2R)-3-phospho-glyceroyl phosphate + ADP. It functions in the pathway carbohydrate biosynthesis; Calvin cycle. This Volvox carteri (Green alga) protein is Phosphoglycerate kinase, chloroplastic (PGK).